Consider the following 194-residue polypeptide: Accessory gene regulator protein B (194 aa).

The next 5 helical transmembrane spans lie at 44–64 (IVVY…LTHL), 80–100 (SSLL…YLII), 107–127 (FVLL…APAA), 142–162 (KILS…TKEP), and 163–183 (VNKL…PIFF).

Belongs to the AgrB family.

The protein localises to the cell membrane. Functionally, essential for the production of a quorum sensing system signal molecule, the autoinducing peptide (AIP). This quorum sensing system is responsible for the regulation of the expression of virulence factor genes. Involved in the proteolytic processing of AgrD, the precursor of AIP. In Staphylococcus epidermidis, this protein is Accessory gene regulator protein B.